A 978-amino-acid polypeptide reads, in one-letter code: Sensor histidine kinase TodS (978 aa).

Positions 32 to 103 (CEEHARIIFD…TQKRLVETAS (72 aa)) constitute a PAS 1 domain. The region spanning 108–162 (VRCDVEILGKSGGREVIAVDFSLLPICNEEGSIVYLLAEGRNITDKKKAEAMLAL) is the PAC 1 domain. A Histidine kinase 1 domain is found at 187–405 (KVSHELRTPL…LFQVKLPLNA (219 aa)). A Phosphohistidine; by autocatalysis modification is found at His-190. The 116-residue stretch at 452–567 (RVLIVEDNPD…ELRARVSNLV (116 aa)) folds into the Response regulatory domain. Asp-500 is subject to 4-aspartylphosphate. In terms of domain architecture, PAS 2 spans 611-681 (SEARWKAVYE…QRLANLLQGG (71 aa)). Residues 685–737 (YSVERSYLCKNGSTIWANASVSLMPQRVGESPVILQIIDDITEKKQAQENLNQ) enclose the PAC 2 domain. The Histidine kinase 2 domain occupies 757–974 (YIAHEINQPL…CFLVSIPARQ (218 aa)). The residue at position 760 (His-760) is a Phosphohistidine.

In terms of processing, autophosphorylated. Activation requires a sequential transfer of a phosphate group from a His in the primary transmitter domain, to an Asp in the receiver domain and to a His in the secondary transmitter domain.

It is found in the cytoplasm. The enzyme catalyses ATP + protein L-histidine = ADP + protein N-phospho-L-histidine.. Activity is regulated by agonists and antagonists. Binding of agonists such as toluene or benzene to TodS stimulates autophosphorylation at His-190. Activity is inhibited by antagonists such as o-xylene, o-chlorotoluene and trimethylbenzene isomers, which bind to TodS but do not stimulate autophosphorylation. Agonists and antagonists bind to the same PAS domain. Its function is as follows. Member of the two-component regulatory system TodS/TodT involved in the regulation of toluene degradation. Phosphorylates TodT via a four-step phosphorelay in response to toluene. Can also be induced by benzene and ethylbenzene. The polypeptide is Sensor histidine kinase TodS (todS) (Pseudomonas putida (strain DOT-T1E)).